The sequence spans 181 residues: ATP-dependent protease subunit HslV (181 aa).

Thr-11 is an active-site residue. Residues Ala-166, Cys-169, and Thr-172 each coordinate Na(+).

The protein belongs to the peptidase T1B family. HslV subfamily. As to quaternary structure, a double ring-shaped homohexamer of HslV is capped on each side by a ring-shaped HslU homohexamer. The assembly of the HslU/HslV complex is dependent on binding of ATP.

The protein resides in the cytoplasm. The catalysed reaction is ATP-dependent cleavage of peptide bonds with broad specificity.. Its activity is regulated as follows. Allosterically activated by HslU binding. In terms of biological role, protease subunit of a proteasome-like degradation complex believed to be a general protein degrading machinery. The polypeptide is ATP-dependent protease subunit HslV (Chlorobaculum parvum (strain DSM 263 / NCIMB 8327) (Chlorobium vibrioforme subsp. thiosulfatophilum)).